The following is a 240-amino-acid chain: MATLFIADLHLCVEEPAITAGFLRFLAGEARNADALYILGDLFEAWIGDDDPNPLHRQMAAAIKAVSDSGVPCYFIHGNRDFLLGKRFARESDMTLLPEEKVLELYGRRVLIMHGDTLCTDDAGYQAFRAKVHNPWLQTLFLALPLFVRKRIAARMRANSKEANSSKSLAIMDVNQNAVVSAMEKHQVQWLIHGHTHRPAVHELIANQQPAFRVVLGAWHTEGSMVKVTADDVELIHFPF.

Residues D8, H10, D41, N79, and H114 each contribute to the Mn(2+) site. Residue 79–80 (NR) coordinates substrate. Substrate-binding residues include D122, S160, N164, K167, and H195. 2 residues coordinate Mn(2+): H195 and H197.

The protein belongs to the LpxH family. Mn(2+) is required as a cofactor.

Its subcellular location is the cell inner membrane. It carries out the reaction UDP-2-N,3-O-bis[(3R)-3-hydroxytetradecanoyl]-alpha-D-glucosamine + H2O = 2-N,3-O-bis[(3R)-3-hydroxytetradecanoyl]-alpha-D-glucosaminyl 1-phosphate + UMP + 2 H(+). It participates in glycolipid biosynthesis; lipid IV(A) biosynthesis; lipid IV(A) from (3R)-3-hydroxytetradecanoyl-[acyl-carrier-protein] and UDP-N-acetyl-alpha-D-glucosamine: step 4/6. Functionally, hydrolyzes the pyrophosphate bond of UDP-2,3-diacylglucosamine to yield 2,3-diacylglucosamine 1-phosphate (lipid X) and UMP by catalyzing the attack of water at the alpha-P atom. Involved in the biosynthesis of lipid A, a phosphorylated glycolipid that anchors the lipopolysaccharide to the outer membrane of the cell. This chain is UDP-2,3-diacylglucosamine hydrolase, found in Shigella dysenteriae serotype 1 (strain Sd197).